Here is a 5386-residue protein sequence, read N- to C-terminus: Nonribosomal peptide synthetase 2 (5386 aa).

Residues 45–435 (HDANAIDFLE…QGLLECLGRV (391 aa)) form an adenylation 1 region. The 74-residue stretch at 544 to 617 (SPKDPIGHSV…DLIEVCRESK (74 aa)) folds into the Carrier 1 domain. Serine 578 is modified (O-(pantetheine 4'-phosphoryl)serine). Positions 652 to 1059 (LPCTPLQEAM…VDADRHVSAI (408 aa)) are condensation 1. The tract at residues 1089 to 1482 (EKWAATDPHR…GRTDDQVKIR (394 aa)) is adenylation 2. The 78-residue stretch at 1611–1688 (ELLSQWERDV…SLASLKKLQS (78 aa)) folds into the Carrier 2 domain. O-(pantetheine 4'-phosphoryl)serine is present on serine 1648. Residues 1731–2141 (ILPCTPLQEA…ALSADTDMFP (411 aa)) are condensation 2. Positions 2166-2551 (FERTALLHPD…GRLDDQVKIR (386 aa)) are adenylation 3. The Carrier 3 domain maps to 2652-2725 (SKTESEVRNI…DLAEHLDQIS (74 aa)). Position 2686 is an O-(pantetheine 4'-phosphoryl)serine (serine 2686). The segment at 2763–3174 (RPCTPLQNGM…HSQIPLAKTD (412 aa)) is condensation 3. The interval 3202-3603 (EKTAQEHPQR…GRADDQVKLR (402 aa)) is adenylation 4. Residues 3728-3805 (EQWSKQEEKL…RLAKSLAANS (78 aa)) form the Carrier 4 domain. At serine 3765 the chain carries O-(pantetheine 4'-phosphoryl)serine. The tract at residues 3846 to 4250 (LAPCTPLQQG…LDQAINDPSA (405 aa)) is condensation 4. Residues 4281–4357 (FEWSDNAIAI…KMAQNMSMKN (77 aa)) enclose the Carrier 5 domain. An O-(pantetheine 4'-phosphoryl)serine modification is found at serine 4318. A condensation 5 region spans residues 4391–4802 (EEILPLTPLQ…ERAEAPVIDM (412 aa)). The tract at residues 4821-4842 (HTGSGHVESGEDDGQDTPSTET) is disordered. In terms of domain architecture, Carrier 6 spans 4840–4913 (TETTNRIRKI…KMAKLADARA (74 aa)). Serine 4874 is modified (O-(pantetheine 4'-phosphoryl)serine). The condensation 6 stretch occupies residues 4952-5257 (QMLPVTAGQL…VQAHLRHLND (306 aa)).

This sequence belongs to the NRP synthetase family.

It participates in siderophore biosynthesis. Its function is as follows. Nonribosomal peptide synthetase; part of the gene cluster that mediates the biosynthesis of hydroxamate-containing siderophores that play a critical role in virulence. Cochliobolus heterostrophus produces extracellular coprogen-type siderophores including coprogen, neocoprogen I and neocoprogen II, as well as the intracellular siderophore ferricrocin. The role of extracellular siderophores is to supply iron to the fungus during plant infection, and the intracellular ferricrocin is required for intracellular iron distribution and storage with a crucial role in ascus and ascospore development. SIDA2 catalyzes the conversion of L-ornithine to N(5)-hydroxyornithine, the first step in the biosynthesis of all hydroxamate-containing siderophores. The assembly of extracellular coprogen-type siderophores is then performed by the nonribosomal peptide synthetase (NRPS) NPS6 whereas the intracellular siderophore ferricrocin is assembled by NPS2. In Cochliobolus heterostrophus (strain C4 / ATCC 48331 / race T) (Southern corn leaf blight fungus), this protein is Nonribosomal peptide synthetase 2.